The primary structure comprises 378 residues: MKYQDLLAIAGCIANAGAVSVSGAAEGFAKGVTGGGSATAVYPSTTAELVSYLGDSEARVIVLTKTFDFTGTEGTTTATGCAPWGTASACQLAINQNNWCTNYEPNAPSVSVTYDNAGILGITVKSNKSLIGSGSSGVIKGKGLRIVSGASNIIIQNIAITDINPKYVWGGDAITIDNADMVWIDHVTTARIGRQHLVLGTSASNRVTISNNYFNGVSSYSATCDGYHYWGIYLDGSNDLVTMKGNYIYHFSGRSPKVQGNTLLHAVNNYWYDSSGHAFEIGSGGYVLAEGNVFQNIDTIVQSPVDGQLFTSPDSNTNKVCSTYLGHVCQVNGFGSSGTFSQADTGFLSNFAGKNIASASAYTAVQSTVPSSAGQGKI.

A signal peptide spans 1 to 18 (MKYQDLLAIAGCIANAGA). 2 disulfides stabilise this stretch: C81/C100 and C90/C224. Residue N127 is glycosylated (N-linked (GlcNAc...) asparagine). R254 is a catalytic residue. Cysteines 321 and 329 form a disulfide.

Belongs to the polysaccharide lyase 1 family.

The protein localises to the secreted. The enzyme catalyses Eliminative cleavage of (1-&gt;4)-alpha-D-galacturonan methyl ester to give oligosaccharides with 4-deoxy-6-O-methyl-alpha-D-galact-4-enuronosyl groups at their non-reducing ends.. Pectinolytic enzymes consist of four classes of enzymes: pectin lyase, polygalacturonase, pectin methylesterase and rhamnogalacturonase. Among pectinolytic enzymes, pectin lyase is the most important in depolymerization of pectin, since it cleaves internal glycosidic bonds of highly methylated pectins. The chain is Probable pectin lyase A (pelA) from Aspergillus fumigatus (strain CBS 144.89 / FGSC A1163 / CEA10) (Neosartorya fumigata).